A 237-amino-acid polypeptide reads, in one-letter code: MNIFDRKINFDALLKFSHITPSTQQHLKKVYASFALCMFVAAAGAYVHMVTHFIQAGLLSALGSLILMIWLMATPHSHETEQKRLGLLAGFAFLTGVGLGPALEFCIAVNPSILPTAFMGTAMIFTCFTLSALYARRRSYLFLGGILMSALSLLLLSSLGNVFFGSIWLFQANLYVGLVVMCGFVLFDTQLIIEKAEHGDQDYIWHCIDLFLDFITVFRKLMMILAMNEKDKKKEKK.

The Cytoplasmic portion of the chain corresponds to 1-29 (MNIFDRKINFDALLKFSHITPSTQQHLKK). Lysine 7 is covalently cross-linked (Glycyl lysine isopeptide (Lys-Gly) (interchain with G-Cter in ubiquitin)). A helical membrane pass occupies residues 30–50 (VYASFALCMFVAAAGAYVHMV). The Lumenal portion of the chain corresponds to 51 to 52 (TH). A helical membrane pass occupies residues 53–73 (FIQAGLLSALGSLILMIWLMA). At 74–86 (TPHSHETEQKRLG) the chain is on the cytoplasmic side. Residues 87-107 (LLAGFAFLTGVGLGPALEFCI) form a helical membrane-spanning segment. Topologically, residues 108–112 (AVNPS) are lumenal. The chain crosses the membrane as a helical span at residues 113–133 (ILPTAFMGTAMIFTCFTLSAL). Over 134 to 139 (YARRRS) the chain is Cytoplasmic. The chain crosses the membrane as a helical span at residues 140 to 160 (YLFLGGILMSALSLLLLSSLG). The Lumenal segment spans residues 161-166 (NVFFGS). A helical transmembrane segment spans residues 167 to 187 (IWLFQANLYVGLVVMCGFVLF). The Cytoplasmic portion of the chain corresponds to 188 to 206 (DTQLIIEKAEHGDQDYIWH). The helical intramembrane region spans 207–227 (CIDLFLDFITVFRKLMMILAM). At 228–237 (NEKDKKKEKK) the chain is on the cytoplasmic side.

It belongs to the BI1 family. In terms of assembly, interacts with BCL2 and BCL2L1. Interacts with ERN1. Ubiquitinated by BFAR, leading to proteasomal degradation. As to expression, highly abundant in testis.

It localises to the endoplasmic reticulum membrane. Endoplasmic reticulum (ER)-resident protein that confers cellular protection as an anti-apoptotic protein by limiting multiple stress-inducing pathways surrounding the endoplasmic reticulum and mitochondria. Inhibits the activities of the key sensor for the endoplasmic reticulum unfolded protein response IRE1alpha/ERN1 both directly and by blocking BAX/BAK binding. Modulates ER calcium homeostasis by acting as a calcium-leak channel. Negatively regulates autophagy and autophagosome formation, especially during periods of nutrient deprivation, and reduces cell survival during starvation. This Homo sapiens (Human) protein is Bax inhibitor 1 (TMBIM6).